The following is a 618-amino-acid chain: Indolepyruvate oxidoreductase subunit IorA (618 aa).

2 consecutive 4Fe-4S ferredoxin-type domains span residues 558–587 and 588–617; these read GRPMAVDGEKCDLCLECIRDLACPAMVTRE and GEVFIDPLKCRGCSVCLQICPAGAIKPEGK. [4Fe-4S] cluster is bound by residues C568, C571, C574, C580, C597, C600, C603, and C607.

In terms of assembly, heterodimer of the IorA and IorB subunits. [4Fe-4S] cluster is required as a cofactor.

The enzyme catalyses indole-3-pyruvate + 2 oxidized [2Fe-2S]-[ferredoxin] + CoA = (indol-3-yl)acetyl-CoA + 2 reduced [2Fe-2S]-[ferredoxin] + CO2 + H(+). In terms of biological role, catalyzes the ferredoxin-dependent oxidative decarboxylation of arylpyruvates. This is Indolepyruvate oxidoreductase subunit IorA (iorA) from Methanothermobacter thermautotrophicus (strain ATCC 29096 / DSM 1053 / JCM 10044 / NBRC 100330 / Delta H) (Methanobacterium thermoautotrophicum).